We begin with the raw amino-acid sequence, 191 residues long: NAD(P)H-quinone oxidoreductase subunit 6, chloroplastic (191 aa).

The next 5 membrane-spanning stretches (helical) occupy residues 10–30 (TIFL…ILLT), 32–52 (IVYS…LYLL), 61–81 (AQIL…VMLI), 89–109 (FFVY…SIFL), and 153–173 (FLLP…GAIT).

It belongs to the complex I subunit 6 family. As to quaternary structure, NDH is composed of at least 16 different subunits, 5 of which are encoded in the nucleus.

The protein resides in the plastid. The protein localises to the chloroplast thylakoid membrane. It carries out the reaction a plastoquinone + NADH + (n+1) H(+)(in) = a plastoquinol + NAD(+) + n H(+)(out). The catalysed reaction is a plastoquinone + NADPH + (n+1) H(+)(in) = a plastoquinol + NADP(+) + n H(+)(out). NDH shuttles electrons from NAD(P)H:plastoquinone, via FMN and iron-sulfur (Fe-S) centers, to quinones in the photosynthetic chain and possibly in a chloroplast respiratory chain. The immediate electron acceptor for the enzyme in this species is believed to be plastoquinone. Couples the redox reaction to proton translocation, and thus conserves the redox energy in a proton gradient. In Marchantia polymorpha (Common liverwort), this protein is NAD(P)H-quinone oxidoreductase subunit 6, chloroplastic (ndhG).